The following is a 671-amino-acid chain: K(+)-insensitive pyrophosphate-energized proton pump (671 aa).

5 helical membrane-spanning segments follow: residues 3 to 23 (SLIF…AFFA), 57 to 77 (TIAV…DDGL), 79 to 99 (IAIG…IGMS), 128 to 148 (AVTG…FYIL), and 156 to 176 (VGFG…GGIF). K178 is a binding site for substrate. Mg(2+)-binding residues include D181, D185, N208, and D211. 6 helical membrane passes run 223–243 (LFET…LIIG), 249–269 (ILYP…SVFF), 285–305 (GVGG…NSLM), 310–330 (LFYA…ITEY), 366–386 (LVPT…VGGA), and 391–411 (IGLY…GMIV). D421 is a Mg(2+) binding site. 4 helical membrane passes run 452 to 472 (AVTK…LFAD), 490 to 510 (VVLA…AVTM), 558 to 578 (MAMP…ILGP), and 580 to 600 (ALAG…LMMD). 3 residues coordinate Ca(2+): D607, D633, and D637. Position 640 (K640) interacts with substrate. A helical transmembrane segment spans residues 646–666 (ALNALIKVVNMVAILFSSLII).

It belongs to the H(+)-translocating pyrophosphatase (TC 3.A.10) family. K(+)-insensitive subfamily. As to quaternary structure, homodimer. It depends on Mg(2+) as a cofactor.

The protein resides in the cell membrane. It carries out the reaction diphosphate + H2O + H(+)(in) = 2 phosphate + 2 H(+)(out). Functionally, proton pump that utilizes the energy of pyrophosphate hydrolysis as the driving force for proton movement across the membrane. Generates a proton motive force. In Methanosarcina acetivorans (strain ATCC 35395 / DSM 2834 / JCM 12185 / C2A), this protein is K(+)-insensitive pyrophosphate-energized proton pump.